The sequence spans 312 residues: Methionyl-tRNA formyltransferase (312 aa).

(6S)-5,6,7,8-tetrahydrofolate is bound at residue 112–115 (SLLP).

This sequence belongs to the Fmt family.

The enzyme catalyses L-methionyl-tRNA(fMet) + (6R)-10-formyltetrahydrofolate = N-formyl-L-methionyl-tRNA(fMet) + (6S)-5,6,7,8-tetrahydrofolate + H(+). Functionally, attaches a formyl group to the free amino group of methionyl-tRNA(fMet). The formyl group appears to play a dual role in the initiator identity of N-formylmethionyl-tRNA by promoting its recognition by IF2 and preventing the misappropriation of this tRNA by the elongation apparatus. The chain is Methionyl-tRNA formyltransferase from Syntrophus aciditrophicus (strain SB).